Here is a 147-residue protein sequence, read N- to C-terminus: Protein-export protein SecB (147 aa).

The protein belongs to the SecB family. In terms of assembly, homotetramer, a dimer of dimers. One homotetramer interacts with 1 SecA dimer.

Its subcellular location is the cytoplasm. Its function is as follows. One of the proteins required for the normal export of preproteins out of the cell cytoplasm. It is a molecular chaperone that binds to a subset of precursor proteins, maintaining them in a translocation-competent state. It also specifically binds to its receptor SecA. The protein is Protein-export protein SecB of Neisseria meningitidis serogroup C (strain 053442).